Here is a 561-residue protein sequence, read N- to C-terminus: Putative transport protein YbjL (561 aa).

5 consecutive transmembrane segments (helical) span residues 8–28 (LLNG…LCLG), 32–52 (LGSV…LLGQ), 66–86 (FMLF…SIFF), 94–114 (MLAL…GKLF), and 158–178 (NLSL…IVGA). RCK C-terminal domains are found at residues 200-288 (RGLD…SFRN) and 292-373 (VFDR…RIGF). 5 helical membrane passes run 383–403 (LLAF…TFQF), 406–426 (FSFG…LGFL), 447–467 (FGLM…INNG), 475–495 (MLIA…LFGA), and 537–557 (GTYA…VIIW).

Belongs to the AAE transporter (TC 2.A.81) family. YbjL subfamily.

Its subcellular location is the cell membrane. The chain is Putative transport protein YbjL from Salmonella choleraesuis (strain SC-B67).